The chain runs to 489 residues: MQWEVVIGLETHAQLQTQSKIFSGASTRFGAEPNTQACAVDLALPGVLPVLNREAVEHAIRFGLAVNAKISPASIFARKNYFYPDLPKGYQISQMEIPVVVGGHVEILVGDEVKVVELTRAHMEEDAGKSVHEEDFTGPYGEPSSGIDLNRAGTPLLEIVTEPVMRSAAEAVAYAKALHGLVVWLGVCDGNMQEGSFRCDANVSVRPKGQVEFGTRCEIKNLNSFRFLEEAIQYEVRRQIELIEDGGTVVQETRLYDPDRGETRSMRSKEDANDYRYFPDPDLLPVVIDDAWIEDVRSKMPALPAQLREQWQSEFGLSAYDAQLLTQDRDTAKVFEELLAIVGKPLAKAAANLITGEFASSLNRAGIAAANAPLKAEHLASLLTRVADGTISHKIAKDIFAILWEEAIAGKAISTVDQVIEAKGLKQISDSGAIEAIIDQVLAVNQKSVEEFRSGKEKAFNALVGQIMKASQGKANPGQVNELLRKKLG.

Belongs to the GatB/GatE family. GatB subfamily. Heterotrimer of A, B and C subunits.

The catalysed reaction is L-glutamyl-tRNA(Gln) + L-glutamine + ATP + H2O = L-glutaminyl-tRNA(Gln) + L-glutamate + ADP + phosphate + H(+). It catalyses the reaction L-aspartyl-tRNA(Asn) + L-glutamine + ATP + H2O = L-asparaginyl-tRNA(Asn) + L-glutamate + ADP + phosphate + 2 H(+). In terms of biological role, allows the formation of correctly charged Asn-tRNA(Asn) or Gln-tRNA(Gln) through the transamidation of misacylated Asp-tRNA(Asn) or Glu-tRNA(Gln) in organisms which lack either or both of asparaginyl-tRNA or glutaminyl-tRNA synthetases. The reaction takes place in the presence of glutamine and ATP through an activated phospho-Asp-tRNA(Asn) or phospho-Glu-tRNA(Gln). The polypeptide is Aspartyl/glutamyl-tRNA(Asn/Gln) amidotransferase subunit B (Polynucleobacter asymbioticus (strain DSM 18221 / CIP 109841 / QLW-P1DMWA-1) (Polynucleobacter necessarius subsp. asymbioticus)).